The chain runs to 362 residues: Phosphoserine aminotransferase (362 aa).

Residues Ser9 and Arg42 each coordinate L-glutamate. Pyridoxal 5'-phosphate is bound by residues 76-77 (GR), Trp102, Thr153, Asp174, and Gln197. N6-(pyridoxal phosphate)lysine is present on Lys198. 239-240 (NT) is a pyridoxal 5'-phosphate binding site.

This sequence belongs to the class-V pyridoxal-phosphate-dependent aminotransferase family. SerC subfamily. Homodimer. Pyridoxal 5'-phosphate serves as cofactor.

Its subcellular location is the cytoplasm. The enzyme catalyses O-phospho-L-serine + 2-oxoglutarate = 3-phosphooxypyruvate + L-glutamate. It catalyses the reaction 4-(phosphooxy)-L-threonine + 2-oxoglutarate = (R)-3-hydroxy-2-oxo-4-phosphooxybutanoate + L-glutamate. It functions in the pathway amino-acid biosynthesis; L-serine biosynthesis; L-serine from 3-phospho-D-glycerate: step 2/3. Its pathway is cofactor biosynthesis; pyridoxine 5'-phosphate biosynthesis; pyridoxine 5'-phosphate from D-erythrose 4-phosphate: step 3/5. Catalyzes the reversible conversion of 3-phosphohydroxypyruvate to phosphoserine and of 3-hydroxy-2-oxo-4-phosphonooxybutanoate to phosphohydroxythreonine. The polypeptide is Phosphoserine aminotransferase (Escherichia coli O127:H6 (strain E2348/69 / EPEC)).